A 359-amino-acid polypeptide reads, in one-letter code: ATP-dependent 6-phosphofructokinase 1 (359 aa).

Residues glycine 14, lysine 78–glycine 79, and glycine 115–serine 118 each bind ATP. Aspartate 116 contributes to the Mg(2+) binding site. Substrate-binding positions include threonine 139 to aspartate 141, arginine 176, methionine 183 to arginine 185, glutamate 236, arginine 277, and histidine 283 to arginine 286. Aspartate 141 functions as the Proton acceptor in the catalytic mechanism.

This sequence belongs to the phosphofructokinase type A (PFKA) family. Mixed-substrate PFK group III subfamily. As to quaternary structure, homodimer or homotetramer. Mg(2+) is required as a cofactor.

The protein resides in the cytoplasm. It carries out the reaction beta-D-fructose 6-phosphate + ATP = beta-D-fructose 1,6-bisphosphate + ADP + H(+). The protein operates within carbohydrate degradation; glycolysis; D-glyceraldehyde 3-phosphate and glycerone phosphate from D-glucose: step 3/4. Catalyzes the phosphorylation of D-fructose 6-phosphate to fructose 1,6-bisphosphate by ATP, the first committing step of glycolysis. In Nostoc sp. (strain PCC 7120 / SAG 25.82 / UTEX 2576), this protein is ATP-dependent 6-phosphofructokinase 1.